A 973-amino-acid chain; its full sequence is EF-hand calcium-binding domain-containing protein 13 (973 aa).

A disordered region spans residues Tyr384–Ser448. Over residues Glu396 to Ser405 the composition is skewed to basic and acidic residues. The span at Lys406–Lys418 shows a compositional bias: low complexity. 6 EF-hand domains span residues Leu488–Phe523, Pro524–Tyr559, Leu633–Ala668, Pro756–Asn791, Leu792–Phe827, and Thr864–Ile899.

In Homo sapiens (Human), this protein is EF-hand calcium-binding domain-containing protein 13 (EFCAB13).